The following is a 319-amino-acid chain: Ribosomal protein L11 methyltransferase (319 aa).

Residues Thr165, Gly186, Asp208, and Asn251 each coordinate S-adenosyl-L-methionine.

It belongs to the methyltransferase superfamily. PrmA family.

It localises to the cytoplasm. The catalysed reaction is L-lysyl-[protein] + 3 S-adenosyl-L-methionine = N(6),N(6),N(6)-trimethyl-L-lysyl-[protein] + 3 S-adenosyl-L-homocysteine + 3 H(+). In terms of biological role, methylates ribosomal protein L11. This is Ribosomal protein L11 methyltransferase from Limosilactobacillus reuteri subsp. reuteri (strain JCM 1112) (Lactobacillus reuteri).